Reading from the N-terminus, the 508-residue chain is 4-trimethylaminobutyraldehyde dehydrogenase A (508 aa).

NAD(+) is bound by residues K194 and 246–250 (GSVPT). The active-site Proton acceptor is the E268. Residue C302 is the Nucleophile of the active site. Position 405 (E405) interacts with NAD(+).

Belongs to the aldehyde dehydrogenase family. In terms of assembly, homotetramer.

The protein resides in the cytoplasm. Its subcellular location is the cytosol. The catalysed reaction is 4-(trimethylamino)butanal + NAD(+) + H2O = 4-(trimethylamino)butanoate + NADH + 2 H(+). It catalyses the reaction an aldehyde + NAD(+) + H2O = a carboxylate + NADH + 2 H(+). Its pathway is amine and polyamine biosynthesis; carnitine biosynthesis. Functionally, converts gamma-trimethylaminobutyraldehyde into gamma-butyrobetaine with high efficiency (in vitro). Can catalyze the irreversible oxidation of a broad range of aldehydes to the corresponding acids in an NAD-dependent reaction, but with low efficiency. This Danio rerio (Zebrafish) protein is 4-trimethylaminobutyraldehyde dehydrogenase A (aldh9a1a).